A 447-amino-acid chain; its full sequence is Argininosuccinate synthase (447 aa).

ATP contacts are provided by residues 17–25 and Ala-43; that span reads AFSGGLDTS. Tyr-99 is a binding site for L-citrulline. ATP-binding residues include Gly-129 and Thr-131. 3 residues coordinate L-aspartate: Thr-131, Asn-135, and Asp-136. Asn-135 lines the L-citrulline pocket. An ATP-binding site is contributed by Asp-136. Arg-139 and Ser-192 together coordinate L-citrulline. Asp-194 contributes to the ATP binding site. L-citrulline contacts are provided by Thr-201, Glu-203, and Glu-280.

This sequence belongs to the argininosuccinate synthase family. Type 2 subfamily. In terms of assembly, homotetramer.

The protein localises to the cytoplasm. It carries out the reaction L-citrulline + L-aspartate + ATP = 2-(N(omega)-L-arginino)succinate + AMP + diphosphate + H(+). It functions in the pathway amino-acid biosynthesis; L-arginine biosynthesis; L-arginine from L-ornithine and carbamoyl phosphate: step 2/3. This chain is Argininosuccinate synthase, found in Salmonella dublin (strain CT_02021853).